The sequence spans 397 residues: GTPase Obg (397 aa).

An Obg domain is found at 1-159 (MKFVDEATII…RNLRLELKVL (159 aa)). The interval 128–148 (TRFKSSVNRAPRQTSKGSEGE) is disordered. Over residues 129-144 (RFKSSVNRAPRQTSKG) the composition is skewed to polar residues. Positions 160–333 (ADVGLLGLPN…LVQAVMRWIE (174 aa)) constitute an OBG-type G domain. Residues 166–173 (GLPNAGKS), 191–195 (FTTLV), 213–216 (DIPG), 283–286 (NKVD), and 314–316 (SAL) each bind GTP. Mg(2+) contacts are provided by Ser173 and Thr193. The span at 336–347 (AEQEADNPDFAE) shows a compositional bias: acidic residues. Residues 336–397 (AEQEADNPDF…YDVEVVYAPE (62 aa)) form a disordered region. The span at 349-370 (EAARRRRMDEEARQKIEADRQA) shows a compositional bias: basic and acidic residues. A compositionally biased stretch (acidic residues) spans 378 to 390 (DDDDDFDDDDYDV).

This sequence belongs to the TRAFAC class OBG-HflX-like GTPase superfamily. OBG GTPase family. Monomer. Requires Mg(2+) as cofactor.

It localises to the cytoplasm. In terms of biological role, an essential GTPase which binds GTP, GDP and possibly (p)ppGpp with moderate affinity, with high nucleotide exchange rates and a fairly low GTP hydrolysis rate. Plays a role in control of the cell cycle, stress response, ribosome biogenesis and in those bacteria that undergo differentiation, in morphogenesis control. In Marinobacter nauticus (strain ATCC 700491 / DSM 11845 / VT8) (Marinobacter aquaeolei), this protein is GTPase Obg.